The primary structure comprises 79 residues: Defensin-like protein 3 (79 aa).

An N-terminal signal peptide occupies residues 1–29 (MAKFASIVALLFAALVVFAAFEAPTVVEA). 4 cysteine pairs are disulfide-bonded: C32–C79, C43–C64, C49–C73, and C53–C75.

The protein belongs to the DEFL family.

Its subcellular location is the secreted. In terms of biological role, possesses antifungal activity sensitive to inorganic cations. The polypeptide is Defensin-like protein 3 (AFP3) (Raphanus sativus (Radish)).